The primary structure comprises 500 residues: L-arabinose isomerase (500 aa).

Residues glutamate 306, glutamate 333, histidine 350, and histidine 450 each contribute to the Mn(2+) site.

It belongs to the arabinose isomerase family. Homohexamer. It depends on Mn(2+) as a cofactor.

The enzyme catalyses beta-L-arabinopyranose = L-ribulose. The protein operates within carbohydrate degradation; L-arabinose degradation via L-ribulose; D-xylulose 5-phosphate from L-arabinose (bacterial route): step 1/3. Its function is as follows. Catalyzes the conversion of L-arabinose to L-ribulose. This chain is L-arabinose isomerase, found in Enterobacter sp. (strain 638).